The sequence spans 871 residues: DNA mismatch repair protein MutS (871 aa).

ATP is bound at residue 625 to 632 (GPNMAGKS).

The protein belongs to the DNA mismatch repair MutS family.

Its function is as follows. This protein is involved in the repair of mismatches in DNA. It is possible that it carries out the mismatch recognition step. This protein has a weak ATPase activity. This Chlorobium limicola (strain DSM 245 / NBRC 103803 / 6330) protein is DNA mismatch repair protein MutS.